We begin with the raw amino-acid sequence, 219 residues long: Thiamine-phosphate synthase (219 aa).

Residues 44 to 48 (QFREK) and N79 each bind 4-amino-2-methyl-5-(diphosphooxymethyl)pyrimidine. Mg(2+) contacts are provided by D80 and D99. S117 provides a ligand contact to 4-amino-2-methyl-5-(diphosphooxymethyl)pyrimidine. 143–145 (TST) contributes to the 2-[(2R,5Z)-2-carboxy-4-methylthiazol-5(2H)-ylidene]ethyl phosphate binding site. Residue K146 coordinates 4-amino-2-methyl-5-(diphosphooxymethyl)pyrimidine. 2-[(2R,5Z)-2-carboxy-4-methylthiazol-5(2H)-ylidene]ethyl phosphate contacts are provided by residues G175 and 195–196 (IS).

Belongs to the thiamine-phosphate synthase family. The cofactor is Mg(2+).

It carries out the reaction 2-[(2R,5Z)-2-carboxy-4-methylthiazol-5(2H)-ylidene]ethyl phosphate + 4-amino-2-methyl-5-(diphosphooxymethyl)pyrimidine + 2 H(+) = thiamine phosphate + CO2 + diphosphate. The enzyme catalyses 2-(2-carboxy-4-methylthiazol-5-yl)ethyl phosphate + 4-amino-2-methyl-5-(diphosphooxymethyl)pyrimidine + 2 H(+) = thiamine phosphate + CO2 + diphosphate. It catalyses the reaction 4-methyl-5-(2-phosphooxyethyl)-thiazole + 4-amino-2-methyl-5-(diphosphooxymethyl)pyrimidine + H(+) = thiamine phosphate + diphosphate. It participates in cofactor biosynthesis; thiamine diphosphate biosynthesis; thiamine phosphate from 4-amino-2-methyl-5-diphosphomethylpyrimidine and 4-methyl-5-(2-phosphoethyl)-thiazole: step 1/1. Condenses 4-methyl-5-(beta-hydroxyethyl)thiazole monophosphate (THZ-P) and 2-methyl-4-amino-5-hydroxymethyl pyrimidine pyrophosphate (HMP-PP) to form thiamine monophosphate (TMP). In Bacillus thuringiensis subsp. konkukian (strain 97-27), this protein is Thiamine-phosphate synthase.